Reading from the N-terminus, the 511-residue chain is Phenylalanine--tRNA ligase alpha subunit (511 aa).

Residues Thr352, 390-392, Tyr429, and Phe455 each bind L-phenylalanine; that span reads QVE.

It belongs to the class-II aminoacyl-tRNA synthetase family. Phe-tRNA synthetase alpha subunit type 2 subfamily. Tetramer of two alpha and two beta subunits. Mg(2+) is required as a cofactor.

Its subcellular location is the cytoplasm. The catalysed reaction is tRNA(Phe) + L-phenylalanine + ATP = L-phenylalanyl-tRNA(Phe) + AMP + diphosphate + H(+). In Methanothermobacter thermautotrophicus (strain ATCC 29096 / DSM 1053 / JCM 10044 / NBRC 100330 / Delta H) (Methanobacterium thermoautotrophicum), this protein is Phenylalanine--tRNA ligase alpha subunit.